Consider the following 224-residue polypeptide: Transcriptional regulatory protein CiaR (224 aa).

One can recognise a Response regulatory domain in the interval 3-116; the sequence is KILLVEDDLG…ELKMRIQALL (114 aa). D51 is modified (4-aspartylphosphate). The segment at residues 124–222 is a DNA-binding region (ompR/PhoB-type); it reads ENTLTYGNIV…LRSVGYLLKD (99 aa).

In terms of processing, phosphorylated by CiaH.

It localises to the cytoplasm. In terms of biological role, member of the two-component regulatory system CiaH/CiaR. Involved in early steps of competence regulation and in penicillin susceptibility. The chain is Transcriptional regulatory protein CiaR (ciaR) from Streptococcus pneumoniae (strain ATCC BAA-255 / R6).